The primary structure comprises 569 residues: ATP-dependent RNA helicase HAS1 (569 aa).

2 disordered regions span residues 1–57 (MSKG…DQNF) and 71–110 (FKEE…FEDL). Acidic residues predominate over residues 34–45 (EEEISSDEEEAD). Residues 71–85 (FKEEKKQKKNKEPKT) are compositionally biased toward basic and acidic residues. The Q motif signature appears at 105 to 133 (DKFEDLGLSEPTMRAIKDMGFEKMTKVQE). Residues 136–312 (IPPLLAGRDV…RISLRAGPLY (177 aa)) enclose the Helicase ATP-binding domain. 149–156 (AKTGSGKT) contributes to the ATP binding site. A DEAD box motif is present at residues 259–262 (DEAD). The region spanning 326 to 496 (GLEQGYVTCD…NIQSQLTKLI (171 aa)) is the Helicase C-terminal domain.

Belongs to the DEAD box helicase family. DDX18/HAS1 subfamily. As to quaternary structure, associates in the nucleolus with the 60S and pre-60S ribosomal subunits.

Its subcellular location is the nucleus. The protein resides in the nucleolus. It catalyses the reaction ATP + H2O = ADP + phosphate + H(+). ATP-dependent RNA helicase involved in 40S ribosomal subunit biogenesis. Required for the processing and cleavage of 35S pre-rRNA at sites A0, A1, and A2, leading to mature 18S rRNA. The protein is ATP-dependent RNA helicase HAS1 (HAS1) of Meyerozyma guilliermondii (strain ATCC 6260 / CBS 566 / DSM 6381 / JCM 1539 / NBRC 10279 / NRRL Y-324) (Yeast).